A 726-amino-acid polypeptide reads, in one-letter code: Catalase-peroxidase (726 aa).

Residues 1-33 (MSTSDDIHNTTATGKCPFHQGGHDQSAGAGTTT) form a disordered region. The segment at residues 105–226 (WHGAGTYRSI…LGATEMGLIY (122 aa)) is a cross-link (tryptophyl-tyrosyl-methioninium (Trp-Tyr) (with M-252)). His106 (proton acceptor) is an active-site residue. A cross-link (tryptophyl-tyrosyl-methioninium (Tyr-Met) (with W-105)) is located at residues 226-252 (YVNPEGPDHSGEPLSAAAAIRATFGNM). His267 lines the heme b pocket.

It belongs to the peroxidase family. Peroxidase/catalase subfamily. As to quaternary structure, homodimer or homotetramer. Heme b serves as cofactor. Post-translationally, formation of the three residue Trp-Tyr-Met cross-link is important for the catalase, but not the peroxidase activity of the enzyme.

The enzyme catalyses H2O2 + AH2 = A + 2 H2O. It carries out the reaction 2 H2O2 = O2 + 2 H2O. Its function is as follows. Bifunctional enzyme with both catalase and broad-spectrum peroxidase activity. In Shigella flexneri, this protein is Catalase-peroxidase.